A 327-amino-acid polypeptide reads, in one-letter code: Geranylgeranyl transferase type-2 subunit alpha (327 aa).

PFTA repeat units lie at residues 44–78 (YSIE…SLAS), 84–118 (FWDK…HYPT), 123–157 (VWQT…NIES), 163–197 (LDKE…RMFQ), and 207–241 (YIRT…NDIV).

It belongs to the protein prenyltransferase subunit alpha family. In terms of assembly, heterodimer of an alpha and a beta subunit.

The enzyme catalyses geranylgeranyl diphosphate + L-cysteinyl-[protein] = S-geranylgeranyl-L-cysteinyl-[protein] + diphosphate. Catalyzes the transfer of a geranyl-geranyl moiety from geranyl-geranyl pyrophosphate to proteins having the C-terminal -XCC or -XCXC, where both cysteines may become modified. Acts on YPT1 and SEC4. The protein is Geranylgeranyl transferase type-2 subunit alpha (BET4) of Saccharomyces cerevisiae (strain ATCC 204508 / S288c) (Baker's yeast).